Consider the following 186-residue polypeptide: Fucolectin-6 (186 aa).

Residues 1-32 form the signal peptide; the sequence is MKTCNLTDRMKVKMIMLLFQILAISTLQSVSA. Residues 40–186 form an F5/8 type C-like region; it reads QENVAVRGKA…VEVNAMLPAN (147 aa). Ca(2+)-binding residues include Asn-67, Asp-70, Asn-72, and Ser-81. Intrachain disulfides connect Cys-82–Cys-175, Cys-114–Cys-115, and Cys-137–Cys-153. 2 residues coordinate alpha-L-fucose: His-84 and Arg-111. The Cell attachment site signature appears at 111–113; the sequence is RGD. Arg-118 contributes to the alpha-L-fucose binding site. Ca(2+) is bound by residues Cys-175 and Glu-176.

Belongs to the fucolectin family. As to quaternary structure, homotrimer. In terms of tissue distribution, gill mucous cells.

The protein localises to the secreted. Acts as a defensive agent. Recognizes blood group fucosylated oligosaccharides including A, B, H and Lewis B-type antigens. Does not recognize Lewis A antigen and has low affinity for monovalent haptens. The chain is Fucolectin-6 from Anguilla japonica (Japanese eel).